The sequence spans 379 residues: Pathogen-associated molecular patterns-induced protein A70 (379 aa).

The helical transmembrane segment at 7–29 (VASFFTPTTLFLLLNLMIGTIVV) threads the bilayer. The N-linked (GlcNAc...) asparagine glycan is linked to N122. Positions 133–154 (TGSDPHSHSHSHLDLHPDPAPA) are disordered. The span at 137–149 (PHSHSHSHLDLHP) shows a compositional bias: basic and acidic residues. N170 carries an N-linked (GlcNAc...) asparagine glycan. Disordered stretches follow at residues 216-238 (PEEDQPTGTGVNSQINPPGLTRA) and 256-347 (SDPD…DGVD). Residues 221–231 (PTGTGVNSQIN) show a composition bias toward polar residues. Composition is skewed to basic and acidic residues over residues 256–285 (SDPDLDQKQNPDPVLHEEHKHVRSKSESKK) and 322–335 (SLERRRPDTTRVER).

The protein resides in the membrane. The chain is Pathogen-associated molecular patterns-induced protein A70 from Arabidopsis thaliana (Mouse-ear cress).